A 117-amino-acid polypeptide reads, in one-letter code: Immunoglobulin heavy variable 3-30-3 (117 aa).

Positions 1-19 (MEFGLSWVFLVALLRGVQC) are cleaved as a signal peptide. Glutamine 20 carries the post-translational modification Pyrrolidone carboxylic acid. Positions 20 to 44 (QVQLVESGGGVVQPGRSLRLSCAAS) are framework-1. The Ig-like domain occupies 20–117 (QVQLVESGGG…EDTAVYYCAR (98 aa)). Cysteines 41 and 115 form a disulfide. Residues 45–52 (GFTFSSYA) form a complementarity-determining-1 region. The interval 53–69 (MHWVRQAPGKGLEWVAV) is framework-2. The complementarity-determining-2 stretch occupies residues 70 to 77 (ISYDGSNK). The interval 78 to 115 (YYADSVKGRFTISRDNSKNTLYLQMNSLRAEDTAVYYC) is framework-3. Residues 116–117 (AR) form a complementarity-determining-3 region.

Immunoglobulins are composed of two identical heavy chains and two identical light chains; disulfide-linked.

It is found in the secreted. It localises to the cell membrane. In terms of biological role, v region of the variable domain of immunoglobulin heavy chains that participates in the antigen recognition. Immunoglobulins, also known as antibodies, are membrane-bound or secreted glycoproteins produced by B lymphocytes. In the recognition phase of humoral immunity, the membrane-bound immunoglobulins serve as receptors which, upon binding of a specific antigen, trigger the clonal expansion and differentiation of B lymphocytes into immunoglobulins-secreting plasma cells. Secreted immunoglobulins mediate the effector phase of humoral immunity, which results in the elimination of bound antigens. The antigen binding site is formed by the variable domain of one heavy chain, together with that of its associated light chain. Thus, each immunoglobulin has two antigen binding sites with remarkable affinity for a particular antigen. The variable domains are assembled by a process called V-(D)-J rearrangement and can then be subjected to somatic hypermutations which, after exposure to antigen and selection, allow affinity maturation for a particular antigen. This Homo sapiens (Human) protein is Immunoglobulin heavy variable 3-30-3.